The primary structure comprises 167 residues: Putative peroxiredoxin-A (167 aa).

A Thioredoxin domain is found at 4–167; the sequence is IKRGDRFPTT…STAQKIIAKL (164 aa). The active-site Cysteine sulfenic acid (-SOH) intermediate is Cys-53. The Microbody targeting signal signature appears at 165-167; sequence AKL.

It belongs to the peroxiredoxin family. Prx5 subfamily.

It is found in the peroxisome membrane. It carries out the reaction a hydroperoxide + [thioredoxin]-dithiol = an alcohol + [thioredoxin]-disulfide + H2O. Functionally, thiol-specific peroxidase that catalyzes the reduction of hydrogen peroxide and organic hydroperoxides to water and alcohols, respectively. Plays a role in cell protection against oxidative stress by detoxifying peroxides and as sensor of hydrogen peroxide-mediated signaling events. The chain is Putative peroxiredoxin-A (PMPA) from Candida boidinii (Yeast).